Here is a 518-residue protein sequence, read N- to C-terminus: Envelope protein (518 aa).

The signal sequence occupies residues 1–31; that stretch reads MSVNRSSIKSLLMVFMIVSSSLLAPVGGAAA. At 32 to 485 the chain is on the extracellular side; that stretch reads DEFRTPAASD…IEDREPEAGG (454 aa). Asn-213 carries an N-linked (GlcNAc...) (hybrid) asparagine; by host glycan. The helical transmembrane segment at 486–506 threads the bilayer; the sequence is FFGSGSTDTMLVGLLALAGVL. Topologically, residues 507–518 are cytoplasmic; that stretch reads LLAQSNNRGGRR.

Post-translationally, N-glycosylated by a pentasaccharide comprising glucose, glucuronic acid and a terminal 5-N-formyl-legionaminic acid residue.

It localises to the virion membrane. Envelope protein that may play a role in host-cell attachment and viral genome entry. This chain is Envelope protein, found in Halorubrum sp. PV6 (HRPV-1).